Here is a 689-residue protein sequence, read N- to C-terminus: Small ribosomal subunit protein mS39 (689 aa).

A mitochondrion-targeting transit peptide spans M1–Y37. Residue K126 is modified to N6-acetyllysine. 10 PPR repeats span residues I149–V183, S184–E219, N255–A289, D290–P330, N331–P367, S368–D409, D412–K446, R454–P488, H489–F523, and P572–P606. Residues N665–K689 are disordered. Positions S673–K689 are enriched in acidic residues.

It belongs to the mitochondrion-specific ribosomal protein mS39 family. As to quaternary structure, component of the mitochondrial small ribosomal subunit (mt-SSU). Mature mammalian 55S mitochondrial ribosomes consist of a small (28S) and a large (39S) subunit. The 28S small subunit contains a 12S ribosomal RNA (12S mt-rRNA) and 30 different proteins. The 39S large subunit contains a 16S rRNA (16S mt-rRNA), a copy of mitochondrial valine transfer RNA (mt-tRNA(Val)), which plays an integral structural role, and 52 different proteins. Associated with the 12S mitochondrial rRNA (12S mt-rRNA). Abundant in testes, skeletal muscle and heart tissue.

Its subcellular location is the mitochondrion. Functionally, mitochondrial RNA-binding protein that has a role in mitochondrial translation. The polypeptide is Small ribosomal subunit protein mS39 (PTCD3) (Homo sapiens (Human)).